The chain runs to 144 residues: Protein D (144 aa).

The protein is Protein D (D) of Escherichia coli.